The chain runs to 796 residues: RalBP1-associated Eps domain-containing protein 1 (796 aa).

In terms of domain architecture, EH 1 spans 10-113; that stretch reads EQKYYSDLFS…SKNEQESRHA (104 aa). The tract at residues 105–237 is disordered; that stretch reads KNEQESRHAA…ENWVSFADTP (133 aa). The span at 115–126 shows a compositional bias: polar residues; it reads SYSSDSENQGSY. Residues serine 143, serine 145, serine 162, serine 166, and serine 170 each carry the phosphoserine modification. The segment covering 145-156 has biased composition (polar residues); it reads SHDTVQPRTSAD. Threonine 173 is subject to Phosphothreonine. A phosphoserine mark is found at serine 272 and serine 273. In terms of domain architecture, EH 2 spans 285–374; sequence QRQYYVNQFK…ESLMPKLIDL (90 aa). The residue at position 288 (tyrosine 288) is a Phosphotyrosine. Serine 307 is subject to Phosphoserine. Positions 318–353 constitute an EF-hand domain; that stretch reads LPILELSHIWELSDFDKDGALTLDEFCAAFHLVVAR. Positions 331, 333, 335, and 342 each coordinate Ca(2+). Residues 377–433 form a disordered region; sequence SADVGDQPGEVGYSGSPAEAPPSKSPSMPSLNQTWPELNQSSEQWETFSERSSSSQT. Residues 407-433 are compositionally biased toward polar residues; sequence LNQTWPELNQSSEQWETFSERSSSSQT. Phosphoserine occurs at positions 475, 482, 489, and 540. The span at 506-543 shows a compositional bias: polar residues; that stretch reads GNTVADGYSSSDSFTSDPEQIGSNVTRQRSHSGTSPDN. 2 disordered regions span residues 506–624 and 638–725; these read GNTV…IPEQ and ASNV…QKTG. Residue threonine 544 is modified to Phosphothreonine. Pro residues predominate over residues 544–554; it reads TAPPPPPPRPQ. Position 562 is a phosphoserine (serine 562). Residues 563–574 show a composition bias toward polar residues; sequence LDMNRTFTVTTG. Residues 575–584 show a composition bias toward low complexity; it reads QQQAGVVAHP. Positions 585–596 are enriched in pro residues; the sequence is PAVPPRPQPSQA. Residues 612-623 are compositionally biased toward polar residues; the sequence is THTSTSPQQIPE. Residues 652 to 796 are interaction with RALBP1; that stretch reads HPEVLPAEKA…LEQLRPFSHL (145 aa). Basic and acidic residues-rich tracts occupy residues 671–681 and 708–722; these read AKTDSKTEEKT and KSED…EHTQ. Phosphoserine occurs at positions 709 and 740. A coiled-coil region spans residues 751 to 791; that stretch reads SIRRNKETNTVLARLNSELQQQLKDVLEERISLEVQLEQLR.

Homodimer (Potential). Interacts with RAB11FIP2. Interacts with RALBP1, CRK and GRB2. Binding to RALBP1 does not affect its Ral-binding activity. Forms a complex with the SH3 domains of CRK and GRB2 which may link it to an EGF-responsive tyrosine kinase. Interacts with AMPH, ITSN1 (via SH3 domains) and SGIP1; may be involved in clathrin-mediated endocytosis. EGF stimulates phosphorylation on Tyr-residues. As to expression, widely expressed with highest levels in heart and testis.

It is found in the membrane. The protein localises to the clathrin-coated pit. Its function is as follows. May coordinate the cellular actions of activated EGF receptors and Ral-GTPases. The chain is RalBP1-associated Eps domain-containing protein 1 (REPS1) from Homo sapiens (Human).